The chain runs to 525 residues: GMP synthase [glutamine-hydrolyzing] (525 aa).

The Glutamine amidotransferase type-1 domain maps to arginine 9–leucine 207. Cysteine 86 serves as the catalytic Nucleophile. Active-site residues include histidine 181 and glutamate 183. Residues tryptophan 208–arginine 400 enclose the GMPS ATP-PPase domain. Residue serine 235–serine 241 coordinates ATP.

In terms of assembly, homodimer.

The catalysed reaction is XMP + L-glutamine + ATP + H2O = GMP + L-glutamate + AMP + diphosphate + 2 H(+). It functions in the pathway purine metabolism; GMP biosynthesis; GMP from XMP (L-Gln route): step 1/1. In terms of biological role, catalyzes the synthesis of GMP from XMP. This Escherichia fergusonii (strain ATCC 35469 / DSM 13698 / CCUG 18766 / IAM 14443 / JCM 21226 / LMG 7866 / NBRC 102419 / NCTC 12128 / CDC 0568-73) protein is GMP synthase [glutamine-hydrolyzing].